Here is a 406-residue protein sequence, read N- to C-terminus: Phosphopentomutase (406 aa).

Asp-10, Asp-305, His-310, Asp-346, His-347, and His-358 together coordinate Mn(2+).

It belongs to the phosphopentomutase family. The cofactor is Mn(2+).

Its subcellular location is the cytoplasm. It catalyses the reaction 2-deoxy-alpha-D-ribose 1-phosphate = 2-deoxy-D-ribose 5-phosphate. The catalysed reaction is alpha-D-ribose 1-phosphate = D-ribose 5-phosphate. It functions in the pathway carbohydrate degradation; 2-deoxy-D-ribose 1-phosphate degradation; D-glyceraldehyde 3-phosphate and acetaldehyde from 2-deoxy-alpha-D-ribose 1-phosphate: step 1/2. Isomerase that catalyzes the conversion of deoxy-ribose 1-phosphate (dRib-1-P) and ribose 1-phosphate (Rib-1-P) to deoxy-ribose 5-phosphate (dRib-5-P) and ribose 5-phosphate (Rib-5-P), respectively. This chain is Phosphopentomutase, found in Allorhizobium ampelinum (strain ATCC BAA-846 / DSM 112012 / S4) (Agrobacterium vitis (strain S4)).